A 309-amino-acid polypeptide reads, in one-letter code: Protein-L-isoaspartate O-methyltransferase (309 aa).

Positions 1–46 (MSGERAKRFPLALEDLKRAPRKSDGRAGERHAAIAAPKAADKPAAV) are disordered. Basic and acidic residues predominate over residues 14–32 (EDLKRAPRKSDGRAGERHA). The span at 33–46 (AIAAPKAADKPAAV) shows a compositional bias: low complexity. Residue Ser-156 is part of the active site.

It belongs to the methyltransferase superfamily. L-isoaspartyl/D-aspartyl protein methyltransferase family.

It localises to the cytoplasm. The enzyme catalyses [protein]-L-isoaspartate + S-adenosyl-L-methionine = [protein]-L-isoaspartate alpha-methyl ester + S-adenosyl-L-homocysteine. Its function is as follows. Catalyzes the methyl esterification of L-isoaspartyl residues in peptides and proteins that result from spontaneous decomposition of normal L-aspartyl and L-asparaginyl residues. It plays a role in the repair and/or degradation of damaged proteins. The chain is Protein-L-isoaspartate O-methyltransferase from Burkholderia vietnamiensis (strain G4 / LMG 22486) (Burkholderia cepacia (strain R1808)).